Here is a 1181-residue protein sequence, read N- to C-terminus: MVVMAQTKLCSDIEIPKEVYNKWKDFIKLVGNIILSIKQIPELEGKFKELLKKGRYNFKSDDFGGQLPEPFTRQKVIEPILEFLGYEFTSEISKKSPLGDRKIPDYRVSVFNKEILIEAEPLGSDLNKKDSGIHQVKEWLIIKSYGVDTGIATNGLEWVLLHYDDTIKEIRTLKELNLKSIFEYVLENKKDKDLENELKQVFSEFYYCFSKEYIEEYIEVATKNIKHKKEEITNEFYKEFVKLVFGFEDVKDVKKKDKSSSEKDKGTKKCLYNCIEAPPNTSELDKKKFAVLLMNRLIFIKFLEDKGIVPRDLLRRTYEDYKKSNVLINYYDAYLKPLFYEVLNTPEDERKENIRTNPYYKDIPYLNGGLFRSNNVPNELSFTIKDNEIIGEVINFLERYKFTLSTSEGSEEVELNPDILGYVYEKLINILAEKGQKGLGAYYTPDEITSYIAKNTIEPIVVERFKEIIKNWKINDINFSTLDEILNEDSKIAENKHILRAFLDELDKIRILDPAVGSGHFLISALKELLQIKKRIYYLLREEMDIYKEKLGIILNNLYGVDIDDIAVEIAKLRLWLALIENLDVEALKRGEVLLPNIEYNVRCGNSLVGWIDENLKQLSISYLCDNVRIMCVLEGLIINAHNSEERKKLKKAKELLEKRDGYVLDNYVEAYHLLYEVYRTSHGLKANLLKELLDEIRDSIYESVTPAYFAEIYQNGNNKKNNGKKSKKNRPRVEEFEKLKPFHWKIDFGWIIKEEGFDVIIGNPPYGNLLSPTEKEIMKRRDTPEFDIFVTFIVHSSKLLKNEGYLGFIIPSSFGTGVRYSNLRKELFTKMCLKKLIYLPFDVFSGAYVDNCIIILHKKPPKSEDLVLIYAFPKKTKKISFEFKNDLFIEYSKILNDPKCRIFPKSPEIYIILDKIKQNCRESLTYLEDLTESTIGILASKYKFSDKKENEYYLPYLEGNVYRYETKLKLKNYVDFSKHKNNEKLINLFMSPEKIFIRRIVNRQDRIMASYGNIEGVVKKDLYVFVLKPDTPINYFYLLGILNSELISYIYIGKSAIALKDDFRQTTLEELRELPIVIPKNKNIINALTQLSKLRFELNDKLNENDRIFLENIIDSLVYGIYFQDLIPKEELNEICNEINGIIKKYDEKSIDCLKYCQNIIKLLNTINTNELVRKIRNKN.

It in the C-terminal section; belongs to the N(4)/N(6)-methyltransferase family.

The enzyme catalyses Endonucleolytic cleavage of DNA to give specific double-stranded fragments with terminal 5'-phosphates.. It carries out the reaction a 2'-deoxyadenosine in DNA + S-adenosyl-L-methionine = an N(6)-methyl-2'-deoxyadenosine in DNA + S-adenosyl-L-homocysteine + H(+). Its function is as follows. Probably a G subtype restriction enzyme that recognizes an undetermined sequence and cleaves at an undetermined site. Probably also acts as an alpha subtype methylase, presumably on the same sequence. This Methanocaldococcus jannaschii (strain ATCC 43067 / DSM 2661 / JAL-1 / JCM 10045 / NBRC 100440) (Methanococcus jannaschii) protein is Putative type II restriction enzyme and methyltransferase RM.MjaORFECS2P.